The following is a 133-amino-acid chain: Snaclec purpureotin subunit alpha (133 aa).

3 disulfides stabilise this stretch: cysteine 2-cysteine 13, cysteine 30-cysteine 127, and cysteine 102-cysteine 119. The 120-residue stretch at 9–128 (FKQYCYQIIK…CEQKHIFMCK (120 aa)) folds into the C-type lectin domain.

This sequence belongs to the snaclec family. In terms of assembly, homodimer (non-covalently linked) of heterodimer of alpha and beta subunits (disulfide-linked). In terms of tissue distribution, expressed by the venom gland.

The protein resides in the secreted. Its function is as follows. Snaclec that induces platelet aggregation without any cofactor in a dose-dependent manner. Its platelet aggregation effect is blocked by echicetin, suggesting it is a GPIb-binding protein which binds to the same or a closely related GPIb site on platelets as echicetin. In Trimeresurus purpureomaculatus (Mangrove pit viper), this protein is Snaclec purpureotin subunit alpha.